Reading from the N-terminus, the 156-residue chain is Snaclec A12 (156 aa).

The first 23 residues, 1 to 23 (MGRSISVSFGLLVVFLSLSGTGA), serve as a signal peptide directing secretion. 3 disulfide bridges follow: C27–C38, C55–C148, and C123–C140. The C-type lectin domain occupies 34–149 (YEGHCYKVFN…CELAYHFICM (116 aa)).

Belongs to the snaclec family. In terms of assembly, heterodimer; disulfide-linked. In terms of tissue distribution, expressed by the venom gland.

It is found in the secreted. Functionally, interferes with one step of hemostasis (modulation of platelet aggregation, or coagulation cascade, for example). The protein is Snaclec A12 of Macrovipera lebetinus (Levantine viper).